The primary structure comprises 999 residues: MWPPRFPPPRPGMSEETRQSKLAAAKKKLREYQQKNSPGVPAGAKKKKKIKNGHSPERPTASDCQSPENVPTDHIAPAPPTAATDTMFLGVTPSPDADLTQSHDAGNCSNLMEETKTFSSTESLRQLSQQLNGLVSESTSYINGEGLTSSNMKELENRYQELAVALDSSYVTNKQLSSTIEELKQQNQDTLDQLEKEKKDYQQKLAKEQGSLREQLQVHIQTIGILVSEKAELQTALAHTQQAARQKAGESEDLASRLQSSRQRVGELERTLSTVSTQQKQADRYNKDLTKERDALKLELYKNSKSNEDLRQQNSELEEKLRVLVAEKAAAQLGVEELQKKLEMSELLLQQFSSQSSAAGGNEQLQHAMEERAQLETHVSQLMESLKQLQVERDQYAENLKGESAMWQQRVQQMAEQVHTLKEEKEHRERQVQELETSLAALRSQMEEPPPPEPPAGPSEAEEQLQGEVEQLHKELERLTGQLRAQVQDNESLSHLNREQEGRLLELEREAQRWSEQAEERKQILESMQSDRTTISRALSQNRELKEQLAELQNGFVRLTNENMEITSALQSEQHVKKELARKLGELQERLGELKETVELKSQEAQGLQEQRDQCLSHLQQYAAAYQQHLAAYEQLTSEKEAIHKQLLLQTQLMDQLQHEEVQGKMAAELARQELQEAQERLKATSQENQQLQAQLSLLVLPGEGDVDQEEEDEEVPQSSLAIPEDLDSREAMVAFFNAAIARAEEEQARLRVQLKEQKARCRSLSHLAAPVQSKLEKEAVVPRNVDDSASEESNQALHVAMEKLQSRFLEVMQEKVELKERVEELEHCCIQLSGETDTIGEYIALYQNQRAVLKARHLEKEEYISRLAQDKEEMKVKLLELQELVLRLVNERNEWQGKFLAVSQNPGDVLTPVPTGSQEFGAADQQDDLREVSLADDIEPAQGEAGVPAPHENPTAQQIMQLLREIQNPRERPGLGSNPCIPFFYRADENDEVKIMVV.

Residues 1–11 (MWPPRFPPPRP) are compositionally biased toward pro residues. 2 disordered regions span residues 1–80 (MWPP…PAPP) and 244–288 (ARQK…YNKD). Residues 1 to 86 (MWPPRFPPPR…PAPPTAATDT (86 aa)) form an interaction with p115/USO1 region. Residues Arg-18 and Arg-30 each carry the dimethylated arginine modification. The Nuclear localization signal signature appears at 26–49 (KKKLREYQQKNSPGVPAGAKKKKK). Phosphoserine is present on residues Ser-37, Ser-66, Ser-273, and Ser-438. Residues 147–895 (LTSSNMKELE…VLRLVNERNE (749 aa)) are a coiled coil. Polar residues predominate over residues 271-280 (TLSTVSTQQK). Residues 444–468 (SQMEEPPPPEPPAGPSEAEEQLQGE) form a disordered region. Residues 448–457 (EPPPPEPPAG) are compositionally biased toward pro residues. 3 positions are modified to phosphoserine: Ser-697, Ser-934, and Ser-978. The interval 989-999 (DENDEVKIMVV) is interaction with GORASP1/GRASP65.

Belongs to the GOLGA2 family. As to quaternary structure, homodimer, may assemble into homohexamers. Homotetramer; forms a parallel homotetramer with a flexible rod-like structure that can give rise to I- and Y-shaped conformations. Interacts with GORASP1/GRASP65. The homooligomer forms a complex with GORASP1 with a 1:1 stoichiometry. Interacts with RAB1B that has been activated by GTP-binding. Interacts with p115/USO1; interaction with p115/USO1 inhibits interaction with STX5 and/or RAB1B. Interacts with STX5. Interacts with ZFPL1. Interacts with AKAP450/AKAP9; leading to recruit AKAP450/AKAP9 to the cis-Golgi. Phosphorylated at Ser-37 by CDK1 at the onset of mitosis, inhibiting the interaction with p115/USO1 and triggering Golgi disassembly. A report however suggests that Golgi disassembly is independent of phosphorylation at Ser-37. Phosphorylated at Ser-37 in prophase as the Golgi complex starts to break down, and remains phosphorylated during further breakdown and partitioning of the Golgi fragments in metaphase and anaphase. In telophase, GM130 is dephosphorylated by PP2A as the Golgi fragments start to reassemble. Post-translationally, cleaved by caspases at the onset of apoptosis. In terms of processing, methylation by PRMT5 is required for Golgi ribbon formation. Widely expressed. Detected in brain, kidney, lung, liver, spleen, heart, skeletal muscle, thymus and pancreas. Detected in spermatocytes. Present in oocytes during all oocyte meiotic maturation (at protein level).

Its subcellular location is the golgi apparatus. It is found in the cis-Golgi network membrane. It localises to the endoplasmic reticulum-Golgi intermediate compartment membrane. The protein resides in the cytoplasm. The protein localises to the cytoskeleton. Its subcellular location is the spindle pole. Functionally, peripheral membrane component of the cis-Golgi stack that acts as a membrane skeleton that maintains the structure of the Golgi apparatus, and as a vesicle thether that facilitates vesicle fusion to the Golgi membrane. Required for normal protein transport from the endoplasmic reticulum to the Golgi apparatus and the cell membrane. Together with p115/USO1 and STX5, involved in vesicle tethering and fusion at the cis-Golgi membrane to maintain the stacked and inter-connected structure of the Golgi apparatus. Plays a central role in mitotic Golgi disassembly: phosphorylation at Ser-37 by CDK1 at the onset of mitosis inhibits the interaction with p115/USO1, preventing tethering of COPI vesicles and thereby inhibiting transport through the Golgi apparatus during mitosis. Also plays a key role in spindle pole assembly and centrosome organization. Promotes the mitotic spindle pole assembly by activating the spindle assembly factor TPX2 to nucleate microtubules around the Golgi and capture them to couple mitotic membranes to the spindle: upon phosphorylation at the onset of mitosis, GOLGA2 interacts with importin-alpha via the nuclear localization signal region, leading to recruit importin-alpha to the Golgi membranes and liberate the spindle assembly factor TPX2 from importin-alpha. TPX2 then activates AURKA kinase and stimulates local microtubule nucleation. Upon filament assembly, nascent microtubules are further captured by GOLGA2, thus linking Golgi membranes to the spindle. Regulates the meiotic spindle pole assembly, probably via the same mechanism. Also regulates the centrosome organization. Also required for the Golgi ribbon formation and glycosylation of membrane and secretory proteins. The sequence is that of Golgin subfamily A member 2 (Golga2) from Mus musculus (Mouse).